A 799-amino-acid polypeptide reads, in one-letter code: Putative mRNA-capping enzyme P5 (799 aa).

This sequence belongs to the phytoreovirus protein P5 family.

It is found in the virion. The protein resides in the host cytoplasm. It catalyses the reaction a 5'-end diphospho-ribonucleoside in mRNA + GTP + H(+) = a 5'-end (5'-triphosphoguanosine)-ribonucleoside in mRNA + diphosphate. The protein operates within mRNA processing; mRNA capping. Its function is as follows. Enzyme involved in mRNA capping (Potential). Binds to GTP and might have guanylyltransferase activity. Together with the RNA-directed RNA polymerase P1 and protein P7, forms an transcriptional complex positioned near the channels situated at each of the five-fold vertices of the core. This is Putative mRNA-capping enzyme P5 from Nephotettix cincticeps (Green rice leafhopper).